A 168-amino-acid polypeptide reads, in one-letter code: Group IIF secretory phospholipase A2 (168 aa).

An N-terminal signal peptide occupies residues 1 to 20 (MKKFFAIAVLAGSVVTTAHS). 7 cysteine pairs are disulfide-bonded: Cys-46–Cys-138, Cys-48–Cys-64, Cys-63–Cys-120, Cys-69–Cys-145, Cys-70–Cys-113, Cys-79–Cys-106, and Cys-98–Cys-111. Positions 47, 49, and 51 each coordinate Ca(2+). His-67 is an active-site residue. Asp-68 contacts Ca(2+). N-linked (GlcNAc...) asparagine glycans are attached at residues Asn-92 and Asn-102. Asp-114 is an active-site residue. Positions 139 to 168 (QGPTPNCSIYDPYPEEVTCGHGLPATPVST) are required for localization on the plasma membrane. Residue Asn-144 is glycosylated (N-linked (GlcNAc...) asparagine).

Belongs to the phospholipase A2 family. It depends on Ca(2+) as a cofactor. In terms of tissue distribution, strongly expressed in testis.

The protein resides in the secreted. It localises to the cell membrane. The catalysed reaction is a 1,2-diacyl-sn-glycero-3-phosphocholine + H2O = a 1-acyl-sn-glycero-3-phosphocholine + a fatty acid + H(+). It carries out the reaction 1-hexadecanoyl-2-(9Z-octadecenoyl)-sn-glycero-3-phospho-(1'-sn-glycerol) + H2O = 1-hexadecanoyl-sn-glycero-3-phospho-(1'-sn-glycerol) + (9Z)-octadecenoate + H(+). It catalyses the reaction 1-hexadecanoyl-2-(9Z,12Z-octadecadienoyl)-sn-glycero-3-phosphoethanolamine + H2O = 1-hexadecanoyl-sn-glycero-3-phosphoethanolamine + (9Z,12Z)-octadecadienoate + H(+). The enzyme catalyses 1-hexadecanoyl-2-(5Z,8Z,11Z,14Z-eicosatetraenoyl)-sn-glycero-3-phosphoethanolamine + H2O = 1-hexadecanoyl-sn-glycero-3-phosphoethanolamine + (5Z,8Z,11Z,14Z)-eicosatetraenoate + H(+). The catalysed reaction is 1-hexadecanoyl-2-(9Z-octadecenoyl)-sn-glycero-3-phosphocholine + H2O = 1-hexadecanoyl-sn-glycero-3-phosphocholine + (9Z)-octadecenoate + H(+). It carries out the reaction 1-hexadecanoyl-2-(9Z-octadecenoyl)-sn-glycero-3-phospho-L-serine + H2O = 1-hexadecanoyl-sn-glycero-3-phospho-L-serine + (9Z)-octadecenoate + H(+). Its function is as follows. Secretory calcium-dependent phospholipase A2 that primarily targets extracellular phospholipids. Hydrolyzes the ester bond of the fatty acyl group attached at the sn-2 position of phospholipids (phospholipase A2 activity), the catalytic efficiency decreasing in the following order: phosphatidylglycerols &gt; phosphatidylethanolamines &gt; phosphatidylcholines &gt; phosphatidylserines. May play a role in lipid mediator production in inflammatory conditions, by providing arachidonic acid to downstream cyclooxygenases and lipoxygenases. This is Group IIF secretory phospholipase A2 (Pla2g2f) from Mus musculus (Mouse).